The following is a 2223-amino-acid chain: Protein CHROMATIN REMODELING 4 (2223 aa).

Positions 39 to 69 (FDSPEYTSSSKPSKQRLKTDSTPERNSSKRK) are disordered. A compositionally biased stretch (basic and acidic residues) spans 55–69 (LKTDSTPERNSSKRK). The segment at 75–122 (YFECVICDLGGDLLCCDSCPRTYHTACLNPPLKRIPNGKWICPKCSPN) adopts a PHD-type zinc-finger fold. 4 stretches are compositionally biased toward basic and acidic residues: residues 173-187 (EKGK…KSTG), 207-223 (SADD…DDLG), 248-285 (ESKL…ETGK), and 294-305 (ELNDGESLERCK). Disordered stretches follow at residues 173-235 (EKGK…LPSD), 248-381 (ESKL…CLED), and 441-474 (AEDR…GTEG). Basic residues predominate over residues 306 to 315 (TDKKRAKKSL). The segment covering 353–368 (ETPEKVKKLPKEERRA) has biased composition (basic and acidic residues). A compositionally biased stretch (polar residues) spans 372 to 381 (TNKSSSCLED). A compositionally biased stretch (basic and acidic residues) spans 441 to 466 (AEDRIDSSSETGKSSRDSRLRDKDMD). Chromo domains lie at 531 to 587 (EEIE…YKAK) and 601 to 663 (KQPQ…ERNS). The Helicase ATP-binding domain occupies 701-878 (RRCWHKSKNV…YNLLNFLQPS (178 aa)). 714-721 (DEMGLGKT) serves as a coordination point for ATP. A DEAH box motif is present at residues 829-832 (DEGH). The short motif at 902 to 909 (LKKLVAPH) is the Nuclear localization signal element. Positions 1008–1167 (LLHSMLKVLH…GSQKEFEDIL (160 aa)) constitute a Helicase C-terminal domain. Disordered regions lie at residues 1268–1300 (EETA…DDVV), 1341–1380 (EAYA…LKEK), 1394–1463 (RRNS…ECLP), 1483–1511 (SESS…FNLP), 1760–1779 (LSSL…SSLF), and 2006–2223 (IPPF…LSDD). Residues 1363-1380 (EPELKKEYTPAGRALKEK) are compositionally biased toward basic and acidic residues. Residues 1375 to 1402 (RALKEKFTKLRERQKNLIARRNSVEESL) are a coiled coil. Polar residues predominate over residues 1403–1414 (PSGNVDQVTEVA). Pro residues predominate over residues 2009 to 2019 (FVIPEPPPPAP). The segment covering 2025 to 2035 (SLRKKRKRKLH) has biased composition (basic residues). Polar residues-rich tracts occupy residues 2039-2061 (QKTT…GNPQ), 2075-2096 (GETS…TEPL), and 2128-2148 (TGTT…TINQ). A compositionally biased stretch (basic and acidic residues) spans 2157–2171 (DEKVESERTPLHSDE). The stretch at 2189-2215 (IEAESQNTNAEEEAEAQEEDEESMKMV) forms a coiled coil. Acidic residues predominate over residues 2198–2210 (AEEEAEAQEEDEE).

This sequence belongs to the SNF2/RAD54 helicase family.

Its subcellular location is the nucleus. In terms of biological role, chromatin-remodeling protein that binds DNA through histones and regulates gene transcription. May specifically recognize and bind trimethylated 'Lys-27' (H3K27me3) and non-methylated 'Lys-4' of histone H3. Probable chromatin remodeling factor. The polypeptide is Protein CHROMATIN REMODELING 4 (Arabidopsis thaliana (Mouse-ear cress)).